A 100-amino-acid polypeptide reads, in one-letter code: UPF0248 protein APE_0939 (100 aa).

It belongs to the UPF0248 family.

The chain is UPF0248 protein APE_0939 from Aeropyrum pernix (strain ATCC 700893 / DSM 11879 / JCM 9820 / NBRC 100138 / K1).